The primary structure comprises 178 residues: Ribosome maturation factor RimP (178 aa).

This sequence belongs to the RimP family.

The protein resides in the cytoplasm. Functionally, required for maturation of 30S ribosomal subunits. The sequence is that of Ribosome maturation factor RimP from Streptococcus pyogenes serotype M18 (strain MGAS8232).